Here is a 227-residue protein sequence, read N- to C-terminus: PKHD-type hydroxylase Mnod_1077 (227 aa).

Positions 78 to 178 (RVLPPLFNRY…RWSAFFWSQS (101 aa)) constitute a Fe2OG dioxygenase domain. Fe cation is bound by residues His96, Asp98, and His159. Arg169 serves as a coordination point for 2-oxoglutarate.

Fe(2+) is required as a cofactor. Requires L-ascorbate as cofactor.

This chain is PKHD-type hydroxylase Mnod_1077, found in Methylobacterium nodulans (strain LMG 21967 / CNCM I-2342 / ORS 2060).